A 160-amino-acid polypeptide reads, in one-letter code: Transcription antitermination protein NusB (160 aa).

Belongs to the NusB family.

Involved in transcription antitermination. Required for transcription of ribosomal RNA (rRNA) genes. Binds specifically to the boxA antiterminator sequence of the ribosomal RNA (rrn) operons. The chain is Transcription antitermination protein NusB from Allorhizobium ampelinum (strain ATCC BAA-846 / DSM 112012 / S4) (Agrobacterium vitis (strain S4)).